Consider the following 251-residue polypeptide: 3-deoxy-manno-octulosonate cytidylyltransferase (251 aa).

Belongs to the KdsB family.

It is found in the cytoplasm. It catalyses the reaction 3-deoxy-alpha-D-manno-oct-2-ulosonate + CTP = CMP-3-deoxy-beta-D-manno-octulosonate + diphosphate. It participates in nucleotide-sugar biosynthesis; CMP-3-deoxy-D-manno-octulosonate biosynthesis; CMP-3-deoxy-D-manno-octulosonate from 3-deoxy-D-manno-octulosonate and CTP: step 1/1. Its pathway is bacterial outer membrane biogenesis; lipopolysaccharide biosynthesis. In terms of biological role, activates KDO (a required 8-carbon sugar) for incorporation into bacterial lipopolysaccharide in Gram-negative bacteria. The sequence is that of 3-deoxy-manno-octulosonate cytidylyltransferase from Vibrio vulnificus (strain YJ016).